The chain runs to 107 residues: Late embryogenesis abundant protein M10 (107 aa).

Positions 1-19 (MGNLMSLVLVALLFSLSLA) are cleaved as a signal peptide.

In terms of biological role, may be involved in the acquisition of desiccation tolerance during late phase of embryogenesis. The protein is Late embryogenesis abundant protein M10 of Arabidopsis thaliana (Mouse-ear cress).